Reading from the N-terminus, the 426-residue chain is Histidine--tRNA ligase (426 aa).

Belongs to the class-II aminoacyl-tRNA synthetase family. In terms of assembly, homodimer.

It is found in the cytoplasm. The enzyme catalyses tRNA(His) + L-histidine + ATP = L-histidyl-tRNA(His) + AMP + diphosphate + H(+). This Streptococcus equi subsp. zooepidemicus (strain H70) protein is Histidine--tRNA ligase.